Consider the following 315-residue polypeptide: HPr kinase/phosphorylase (315 aa).

Catalysis depends on residues H140 and K161. 155 to 162 (GDSGVGKS) is a binding site for ATP. Residue S162 coordinates Mg(2+). D179 (proton acceptor; for phosphorylation activity. Proton donor; for dephosphorylation activity) is an active-site residue. The important for the catalytic mechanism of both phosphorylation and dephosphorylation stretch occupies residues 203–212 (LEIRGIGIID). Mg(2+) is bound at residue E204. R245 is a catalytic residue. Residues 266 to 271 (PVKTGR) form an important for the catalytic mechanism of dephosphorylation region.

Belongs to the HPrK/P family. As to quaternary structure, homohexamer. It depends on Mg(2+) as a cofactor.

It carries out the reaction [HPr protein]-L-serine + ATP = [HPr protein]-O-phospho-L-serine + ADP + H(+). It catalyses the reaction [HPr protein]-O-phospho-L-serine + phosphate + H(+) = [HPr protein]-L-serine + diphosphate. Its function is as follows. Catalyzes the ATP- as well as the pyrophosphate-dependent phosphorylation of a specific serine residue in HPr, a phosphocarrier protein of the phosphoenolpyruvate-dependent sugar phosphotransferase system (PTS). HprK/P also catalyzes the pyrophosphate-producing, inorganic phosphate-dependent dephosphorylation (phosphorolysis) of seryl-phosphorylated HPr (P-Ser-HPr). The two antagonistic activities of HprK/P are regulated by several intracellular metabolites, which change their concentration in response to the absence or presence of rapidly metabolisable carbon sources (glucose, fructose, etc.) in the growth medium. Therefore, by controlling the phosphorylation state of HPr, HPrK/P is a sensor enzyme that plays a major role in the regulation of carbon metabolism and sugar transport: it mediates carbon catabolite repression (CCR), and regulates PTS-catalyzed carbohydrate uptake and inducer exclusion. In Lactiplantibacillus plantarum (strain ATCC BAA-793 / NCIMB 8826 / WCFS1) (Lactobacillus plantarum), this protein is HPr kinase/phosphorylase.